We begin with the raw amino-acid sequence, 464 residues long: Keratin, type I cytoskeletal 28 (464 aa).

The head stretch occupies residues 1–85; that stretch reads MSLRFSSGSR…GSEGGLFSGN (85 aa). Residues 86–121 form a coil 1A region; it reads EKVTMQNLNDRLASYLDNVRALEEANAELERKIKSW. The region spanning 86–401 is the IF rod domain; the sequence is EKVTMQNLND…RLIDGDRNSC (316 aa). The tract at residues 122–143 is linker 1; sequence YEKHGPGSCHGLDHDYSRYHLT. A coil 1B region spans residues 144–235; the sequence is IEDLKNKIIS…KNHEEEVKAL (92 aa). The segment at 236–258 is linker 12; it reads QCVAGGNVNVEMNAAPGVDLTLL. Residues 259-397 are coil 2; sequence LNNMRAEYED…ETYCRLIDGD (139 aa). Residues 398 to 464 are tail; it reads RNSCSKSKGF…NGKTKQRVPF (67 aa). Residues 402–417 show a composition bias toward low complexity; the sequence is SKSKGFGSGSPGNSSK. 2 disordered regions span residues 402-422 and 440-464; these read SKSK…LSRT and SSRV…RVPF.

It belongs to the intermediate filament family. In terms of assembly, heterotetramer of two type I and two type II keratins.

Its subcellular location is the cytoplasm. Its function is as follows. Essential for the proper assembly of types I and II keratin protein complexes and the formation of keratin intermediate filaments in the inner root sheath (irs). This chain is Keratin, type I cytoskeletal 28, found in Bos taurus (Bovine).